The primary structure comprises 257 residues: BTB/POZ domain-containing protein kctd15-like (257 aa).

Phosphoserine occurs at positions 9 and 12. Residues 30–100 (APVHIDVGGH…LRTSKLLLPE (71 aa)) enclose the BTB domain.

The protein is BTB/POZ domain-containing protein kctd15-like (kctd15l) of Danio rerio (Zebrafish).